A 421-amino-acid chain; its full sequence is G/T mismatch-specific thymine DNA glycosylase (421 aa).

The tract at residues 45–108 (PNMATVTEQQ…STKSKEKQEK (64 aa)) is disordered. A compositionally biased stretch (basic and acidic residues) spans 77–89 (RAAEPQEPVEPKK). Basic residues predominate over residues 91-100 (ATSKKSGKST). Glycyl lysine isopeptide (Lys-Gly) (interchain with G-Cter in SUMO2) cross-links involve residues K114 and K259. Residue K341 forms a Glycyl lysine isopeptide (Lys-Gly) (interchain with G-Cter in SUMO); alternate linkage. Residue K341 forms a Glycyl lysine isopeptide (Lys-Gly) (interchain with G-Cter in SUMO2); alternate linkage.

Belongs to the uracil-DNA glycosylase (UDG) superfamily. TDG/mug family. Homodimer. Interacts with AICDA and GADD45A. Post-translationally, sumoylation on Lys-341 by either SUMO1 or SUMO2 induces dissociation of the product DNA.

The protein resides in the nucleus. The catalysed reaction is Hydrolyzes mismatched double-stranded DNA and polynucleotides, releasing free thymine.. In terms of biological role, DNA glycosylase that plays a key role in active DNA demethylation: specifically recognizes and binds 5-formylcytosine (5fC) and 5-carboxylcytosine (5caC) in the context of CpG sites and mediates their excision through base-excision repair (BER) to install an unmethylated cytosine. Cannot remove 5-hydroxymethylcytosine (5hmC). According to an alternative model, involved in DNA demethylation by mediating DNA glycolase activity toward 5-hydroxymethyluracil (5hmU) produced by deamination of 5hmC. Also involved in DNA repair by acting as a thymine-DNA glycosylase that mediates correction of G/T mispairs to G/C pairs: in the DNA of higher eukaryotes, hydrolytic deamination of 5-methylcytosine to thymine leads to the formation of G/T mismatches. Its role in the repair of canonical base damage is however minor compared to its role in DNA demethylation. It is capable of hydrolyzing the carbon-nitrogen bond between the sugar-phosphate backbone of the DNA and a mispaired thymine. In addition to the G/T, it can remove thymine also from C/T and T/T mispairs in the order G/T &gt;&gt; C/T &gt; T/T. It has no detectable activity on apyrimidinic sites and does not catalyze the removal of thymine from A/T pairs or from single-stranded DNA. It can also remove uracil and 5-bromouracil from mispairs with guanine. This is G/T mismatch-specific thymine DNA glycosylase (Tdg) from Mus musculus (Mouse).